The following is a 254-amino-acid chain: Phosphate import ATP-binding protein PstB (254 aa).

The ABC transporter domain maps to 7 to 249 (MVAESMSFYY…PREKQTEDYI (243 aa)). 39–46 (GPSGCGKS) is a binding site for ATP.

Belongs to the ABC transporter superfamily. Phosphate importer (TC 3.A.1.7) family. The complex is composed of two ATP-binding proteins (PstB), two transmembrane proteins (PstC and PstA) and a solute-binding protein (PstS).

Its subcellular location is the cell inner membrane. It catalyses the reaction phosphate(out) + ATP + H2O = ADP + 2 phosphate(in) + H(+). Part of the ABC transporter complex PstSACB involved in phosphate import. Responsible for energy coupling to the transport system. This is Phosphate import ATP-binding protein PstB from Chlorobium chlorochromatii (strain CaD3).